Reading from the N-terminus, the 150-residue chain is UPF0178 protein AZOSEA36080 (150 aa).

It belongs to the UPF0178 family.

In Aromatoleum aromaticum (strain DSM 19018 / LMG 30748 / EbN1) (Azoarcus sp. (strain EbN1)), this protein is UPF0178 protein AZOSEA36080.